Reading from the N-terminus, the 534-residue chain is Low affinity inorganic phosphate transporter 1 (534 aa).

Residues 1–23 lie on the Cytoplasmic side of the membrane; that stretch reads MAKDLQVLTALDVAKTQLYHFTA. A helical transmembrane segment spans residues 24 to 44; the sequence is IVIAGMGFFTDAYDLFCISLV. Over 45–69 the chain is Extracellular; it reads TKLLGRIYYHHEGALKPGSLPPNVA. A helical membrane pass occupies residues 70 to 90; sequence AAVNGVAFCGTLAGQLFFGWL. Over 91–98 the chain is Cytoplasmic; the sequence is GDKLGRKK. The helical transmembrane segment at 99–119 threads the bilayer; that stretch reads VYGMTLMLMVICSIASGLSFG. At 120-124 the chain is on the extracellular side; that stretch reads HTPKS. A helical membrane pass occupies residues 125-145; that stretch reads VMATLCFFRFWLGFGIGGDYP. The Cytoplasmic segment spans residues 146–163; that stretch reads LSATIMSEYANKKTRGAF. Residues 164–184 form a helical membrane-spanning segment; that stretch reads IAAVFAMQGFGILAGGMVAII. Residues 185 to 210 are Extracellular-facing; sequence VSAAFKNQFPAPAYKDGALASTISQA. Residues 211-231 traverse the membrane as a helical segment; sequence DFVWRIIVMFGAIPTALTYYW. Topologically, residues 232-290 are cytoplasmic; it reads RMKMPETARYTALVAKNLKQATNDMSKVLQVEIEPEQEKVEEISQGNDFGLFTKQFLRR. The helical transmembrane segment at 291-311 threads the bilayer; that stretch reads HGLHLLGTASTWFLLDIAFYS. Residues 312-343 are Extracellular-facing; sequence QNLFQKDIFSAIGWIPPAETMNALEEVYRIAR. A helical membrane pass occupies residues 344 to 364; sequence AQTLIALCSTVPGYWFTVAFI. At 365–369 the chain is on the cytoplasmic side; the sequence is DKIGR. Residues 370-390 form a helical membrane-spanning segment; that stretch reads FAIQLMGFFFMTVFMFALAIP. The Extracellular segment spans residues 391–400; the sequence is YTHWTHKDNR. Residues 401–421 traverse the membrane as a helical segment; the sequence is IGFVIMYSLTFFFANFGPNAT. Over 422 to 440 the chain is Cytoplasmic; that stretch reads TFVVPAEIFPARLRSTCHG. Residues 441-461 traverse the membrane as a helical segment; sequence ISAAAGKAGAMVGAFGFLYAA. Over 462-481 the chain is Extracellular; sequence QSTDPKKTDAGYPAGIGVRN. A helical transmembrane segment spans residues 482–502; it reads SLIVLGCVNFLGMLFTLLVPE. Over 503–534 the chain is Cytoplasmic; it reads SKGKSLEEMSRENEGEDENGTEMRASGRTVPV. Residues 507 to 534 form a disordered region; sequence SLEEMSRENEGEDENGTEMRASGRTVPV.

Belongs to the major facilitator superfamily. Phosphate:H(+) symporter (TC 2.A.1.9) family.

It localises to the cell membrane. It carries out the reaction phosphate(in) + H(+)(in) = phosphate(out) + H(+)(out). Functionally, low-affinity transporter for external inorganic phosphate (Pi). Involved in phosphorus (P) remobilization from dying to developing tissues during corolla senescence in an ethylene-dependent manner. This chain is Low affinity inorganic phosphate transporter 1, found in Petunia hybrida (Petunia).